The chain runs to 207 residues: MSLFITFEGGEGCGKSTQSKALYRYLKKLGLGCVLTHEPGGTRSGDKITRLLKWSEEENISPLAELFLFNASRSILIDNVIKPALLDGNIVICDRYTDSTLAYQGYGRGLELDTVKCINSLASGGLVPDLTIWLDMDDKAALLRKGKLPPDRFESENNGFHQRVRDGFGVIAAAEPNRFLKLDASLSQSELTKCIKQRVNALLKLPQ.

9–16 (GGEGCGKS) is an ATP binding site.

The protein belongs to the thymidylate kinase family.

The enzyme catalyses dTMP + ATP = dTDP + ADP. Its function is as follows. Phosphorylation of dTMP to form dTDP in both de novo and salvage pathways of dTTP synthesis. The protein is Thymidylate kinase of Dehalococcoides mccartyi (strain ATCC BAA-2266 / KCTC 15142 / 195) (Dehalococcoides ethenogenes (strain 195)).